The following is a 587-amino-acid chain: MASEDIAKLAETLAKTQVAGGQLSFKGKSLKLNTAEDAKDVIKEIEDFDSLEALRLEGNTVGVEAARVIAKALEKKSELKRCHWSDMFTGRLRTEIPPALISLGEGLITAGAQLVELDLSDNAFGPDGVQGFEALLKSSACFTLQELKLNNCGMGIGGGKILAAALTECHRKSSAQGKPLALKVFVAGRNRLENDGATALAEAFRVIGTLEEVHMPQNGINHPGITALAQAFAVNPLLRVINLNDNTFTEKGAVAMAETLKTLRQVEVINFGDCLVRSKGAVAIADAIRGGLPKLKELNLSFCEIKRDAALAVAEAMADKAELEKLDLNGNTLGEEGCEQLQEVLEGFNMAKVLASLSDDEDEEEEEEGEEEEEEAEEEEEEDEEEEEEEEEEEEEEPQQRGQGEKSATPSRKILDPNTGEPAPVLSSPPPADVSTFLAFPSPEKLLRLGPKSSVLIAQQTDTSDPEKVVSAFLKVSSVFKDEATVRMAVQDAVDALMQKAFNSSSFNSNTFLTRLLVHMGLLKSEDKVKAIANLYGPLMALNHMVQQDYFPKALAPLLLAFVTKPNSALESCSFARHSLLQTLYKV.

A2 is subject to N-acetylalanine. K8 is covalently cross-linked (Glycyl lysine isopeptide (Lys-Gly) (interchain with G-Cter in SUMO1); alternate). K8 participates in a covalent cross-link: Glycyl lysine isopeptide (Lys-Gly) (interchain with G-Cter in SUMO2); alternate. K15 is covalently cross-linked (Glycyl lysine isopeptide (Lys-Gly) (interchain with G-Cter in SUMO2)). Position 24 is a phosphoserine (S24). 4 LRR repeats span residues 48–71 (FDSL…VIAK), 111–134 (GAQL…GFEA), 207–230 (IGTL…ALAQ), and 235–258 (NPLL…AMAE). K279 is covalently cross-linked (Glycyl lysine isopeptide (Lys-Gly) (interchain with G-Cter in SUMO2)). 2 LRR repeats span residues 292–319 (LPKL…AMAD) and 320–343 (KAEL…QLQE). S301 bears the Phosphoserine mark. Residues 357-430 (LSDDEDEEEE…EPAPVLSSPP (74 aa)) form a disordered region. Residue S358 is modified to Phosphoserine. The span at 358 to 397 (SDDEDEEEEEEGEEEEEEAEEEEEEDEEEEEEEEEEEEEE) shows a compositional bias: acidic residues. Residues 400 to 410 (QRGQGEKSATP) are compositionally biased toward polar residues. T409 is subject to Phosphothreonine; by CDK2. S428 and S435 each carry phosphoserine. Residue T436 is modified to Phosphothreonine. Phosphoserine is present on S442. A Glycyl lysine isopeptide (Lys-Gly) (interchain with G-Cter in SUMO2) cross-link involves residue K452. The SUMO conjugation motif lies at 523–526 (LKSE). K524 participates in a covalent cross-link: Glycyl lysine isopeptide (Lys-Gly) (interchain with G-Cter in SUMO1); alternate. Residue K524 forms a Glycyl lysine isopeptide (Lys-Gly) (interchain with G-Cter in SUMO2); alternate linkage. K524 is modified (N6-acetyllysine; alternate). K586 participates in a covalent cross-link: Glycyl lysine isopeptide (Lys-Gly) (interchain with G-Cter in SUMO2).

This sequence belongs to the RNA1 family. Homodimer. Interacts with RAN. Forms a complex with RANBP2/NUP358, NXF1 and NXT1. Forms a tight complex in association with RANBP2/NUP358 and UBE2I/UBC9, the ubiquitin-conjugating enzyme E2. Interacts with UBE2I; the interaction conjugates SUMO1 to RANGAP1, and subsequently stabilizes interactions of sumoylated RANGAP1 with RANBP2/NUP358. The complex composed of RANBP2, SUMO1, RANGAP1 and UBE2I associates with nuclear pore complexes. Identified in a complex composed of RAN, RANBP2, sumoylated RANGAP1, UBE2I and XPO1. Identified in a complex composed of RAN, RANGAP1 and RANBP1. Interacts with TRAF6. Interacts with SUMO1 and SENP1. Interacts (when sumoylated) with MYCBP2; interaction inhibits MYCBP2 E3 ubiquitin-protein ligase activity and promotes MYCBP2 translocation to the nucleus. Post-translationally, phosphorylation occurs before nuclear envelope breakdown and continues throughout mitosis. Phosphorylated by the M-phase kinase cyclin B/Cdk1, in vitro. Differential timimg of dephosphorylation occurs during phases of mitosis. The phosphorylated form remains associated with RANBP2/NUP358 and the SUMO E2-conjugating enzyme, UBE2I, on nuclear pore complex (NPC) diassembly and during mitosis. In terms of processing, sumoylated. Sumoylation is necessary for targeting to the nuclear envelope (NE), and for association with mitotic spindles and kinetochores during mitosis. Also required for interaction with RANBP2 and is mediated by UBE2I. Desumoylated by HINT1. As to expression, highly expressed in brain, thymus and testis.

The protein localises to the cytoplasm. It is found in the nucleus. Its subcellular location is the nucleoplasm. It localises to the nucleus envelope. The protein resides in the chromosome. The protein localises to the centromere. It is found in the kinetochore. Its subcellular location is the cytoskeleton. It localises to the spindle. GTPase activator for RAN. Converts cytoplasmic GTP-bound RAN to GDP-bound RAN, which is essential for RAN-mediated nuclear import and export. Mediates dissociation of cargo from nuclear export complexes containing XPO1, RAN and RANBP2 after nuclear export. The protein is Ran GTPase-activating protein 1 (RANGAP1) of Homo sapiens (Human).